Here is a 1112-residue protein sequence, read N- to C-terminus: Constitutive coactivator of PPAR-gamma-like protein 1 (1112 aa).

Positions 339 to 403 (PPHYLARPNP…YSLSEPALTL (65 aa)) are interaction with YES1, SRC and FYN. Residues 372–525 (QAKPAVPQVP…GKGSHMGTVQ (154 aa)) are disordered. Polar residues-rich tracts occupy residues 403-418 (LDTS…SYSN) and 433-445 (SPIN…SPNH). The segment covering 479-500 (GWEKTGSHAEPLARGDPGDQVK) has biased composition (basic and acidic residues). A compositionally biased stretch (polar residues) spans 503–512 (GSSTASSGSQ). Threonine 653 is subject to Phosphothreonine. Residues 827 to 1112 (AEQAAKVEKM…LEAAVLNKEE (286 aa)) are RNA binding. Omega-N-methylarginine occurs at positions 871, 882, and 884. The tract at residues 919–943 (AFSGSDSSRTSKSQGGVQPIPSQGG) is disordered. The segment covering 922–934 (GSDSSRTSKSQGG) has biased composition (polar residues). Lysine 930 is modified (N6-acetyllysine). Serine 958 carries the phosphoserine modification. Omega-N-methylarginine occurs at positions 980 and 984. Serine 1021 and serine 1042 each carry phosphoserine. The segment at 1030-1090 (KSKSGESKSS…PCNTNPHLNA (61 aa)) is disordered. The span at 1070-1090 (HSESALNNDSKPCNTNPHLNA) shows a compositional bias: polar residues.

This sequence belongs to the constitutive coactivator of PPAR-gamma family. As to quaternary structure, interacts with PURA. Interacts with SRC family protein kinases YES1, SRC and FYN. Upon tyrosine phosphorylation, interacts with PIK3R1. Interacts with IGF2BP1/IMP-1 in an RNA-dependent manner. Post-translationally, arg-980 is dimethylated, probably to asymmetric dimethylarginine. Phosphorylated on tyrosine by src family kinases upon ultraviolet exposure. In terms of tissue distribution, in the brain, predominantly expressed in the hippocampus, caudate putamen, cerebral cortex and cerebellum. Expression is restricted to neurons (at protein level).

The protein resides in the cytoplasm. It localises to the cell membrane. Its function is as follows. Component of the oxidative stress-induced survival signaling. May regulate the activation of SRC family protein kinases. May act as a scaffolding protein enabling SRC family protein kinases to phosphorylate and activate PI3-kinase. Binds IGF2 RNA and promotes the production of IGF2 protein. The chain is Constitutive coactivator of PPAR-gamma-like protein 1 (FAM120A) from Mus musculus (Mouse).